Here is a 297-residue protein sequence, read N- to C-terminus: Protease HtpX homolog (297 aa).

2 helical membrane passes run 14–34 (IFLILAFFFLLTAIGAAAGYL) and 39–59 (YQFGIVLALILGSIYAFSMIF). His-143 provides a ligand contact to Zn(2+). Glu-144 is an active-site residue. His-147 lines the Zn(2+) pocket. 2 helical membrane passes run 153–173 (IRISTIAVALASAITLIASMG) and 196–216 (IVFLIFSLLSLILAPLIASMV). Glu-225 provides a ligand contact to Zn(2+).

It belongs to the peptidase M48B family. It depends on Zn(2+) as a cofactor.

Its subcellular location is the cell membrane. The chain is Protease HtpX homolog from Streptococcus uberis (strain ATCC BAA-854 / 0140J).